We begin with the raw amino-acid sequence, 451 residues long: Chromosomal replication initiator protein DnaA (451 aa).

Residues 1 to 72 form a domain I, interacts with DnaA modulators region; that stretch reads MQSIEDIWQE…ANILQEITGR (72 aa). A domain II region spans residues 72–108; it reads RLFDVRFIDGEQEENFEYTVIKPNPALDEDGVEIGKH. Residues 109-325 form a domain III, AAA+ region region; the sequence is MLNPRYVFDT…GALIRVVAYS (217 aa). Residues Gly-153, Gly-155, Lys-156, and Thr-157 each contribute to the ATP site. The interval 326–451 is domain IV, binds dsDNA; it reads SLVNKDITAG…KNLRKAQNMF (126 aa).

The protein belongs to the DnaA family. In terms of assembly, oligomerizes as a right-handed, spiral filament on DNA at oriC.

The protein localises to the cytoplasm. Plays an essential role in the initiation and regulation of chromosomal replication. ATP-DnaA binds to the origin of replication (oriC) to initiate formation of the DNA replication initiation complex once per cell cycle. Binds the DnaA box (a 9 base pair repeat at the origin) and separates the double-stranded (ds)DNA. Forms a right-handed helical filament on oriC DNA; dsDNA binds to the exterior of the filament while single-stranded (ss)DNA is stabiized in the filament's interior. The ATP-DnaA-oriC complex binds and stabilizes one strand of the AT-rich DNA unwinding element (DUE), permitting loading of DNA polymerase. After initiation quickly degrades to an ADP-DnaA complex that is not apt for DNA replication. Binds acidic phospholipids. This chain is Chromosomal replication initiator protein DnaA, found in Listeria monocytogenes serotype 4b (strain CLIP80459).